The primary structure comprises 190 residues: Nuclear transcription factor Y subunit B-2 (190 aa).

The segment at 1 to 30 (MGDSDRDSGGGQNGNNQNGQSSLSPREQDR) is disordered. A DNA-binding region spans residues 32-38 (LPIANVS). The subunit association domain (SAD) stretch occupies residues 59–70 (MQECVSEFISFV). Positions 168 to 190 (HMYGATGGGSDSGGGAASGRTRT) are disordered. Gly residues predominate over residues 172-184 (ATGGGSDSGGGAA).

The protein belongs to the NFYB/HAP3 subunit family. As to quaternary structure, heterotrimeric transcription factor composed of three components, NF-YA, NF-YB and NF-YC. NF-YB and NF-YC must interact and dimerize for NF-YA association and DNA binding. Binds directly with DPB3-1. As to expression, ubiquitous. Predominantly expressed in flowers and siliques.

Its subcellular location is the nucleus. Its function is as follows. Component of the NF-Y/HAP transcription factor complex. The NF-Y complex stimulates the transcription of various genes by recognizing and binding to a CCAAT motif in promoters. This chain is Nuclear transcription factor Y subunit B-2, found in Arabidopsis thaliana (Mouse-ear cress).